We begin with the raw amino-acid sequence, 475 residues long: Ribulose bisphosphate carboxylase large chain (475 aa).

Residues 1–2 (MS) constitute a propeptide that is removed on maturation. N-acetylproline is present on Pro3. N6,N6,N6-trimethyllysine is present on Lys14. Residues Asn123 and Thr173 each contribute to the substrate site. Lys175 acts as the Proton acceptor in catalysis. A substrate-binding site is contributed by Lys177. The Mg(2+) site is built by Lys201, Asp203, and Glu204. An N6-carboxylysine modification is found at Lys201. His294 functions as the Proton acceptor in the catalytic mechanism. Residues Arg295, His327, and Ser379 each coordinate substrate.

The protein belongs to the RuBisCO large chain family. Type I subfamily. Heterohexadecamer of 8 large chains and 8 small chains; disulfide-linked. The disulfide link is formed within the large subunit homodimers. Mg(2+) is required as a cofactor. The disulfide bond which can form in the large chain dimeric partners within the hexadecamer appears to be associated with oxidative stress and protein turnover.

The protein localises to the plastid. The protein resides in the chloroplast. It catalyses the reaction 2 (2R)-3-phosphoglycerate + 2 H(+) = D-ribulose 1,5-bisphosphate + CO2 + H2O. The enzyme catalyses D-ribulose 1,5-bisphosphate + O2 = 2-phosphoglycolate + (2R)-3-phosphoglycerate + 2 H(+). Its function is as follows. RuBisCO catalyzes two reactions: the carboxylation of D-ribulose 1,5-bisphosphate, the primary event in carbon dioxide fixation, as well as the oxidative fragmentation of the pentose substrate in the photorespiration process. Both reactions occur simultaneously and in competition at the same active site. In Adiantum capillus-veneris (Maidenhair fern), this protein is Ribulose bisphosphate carboxylase large chain.